The chain runs to 325 residues: Tetraacyldisaccharide 4'-kinase (325 aa).

Position 53–60 (53–60 (SVGGNGKT)) interacts with ATP.

The protein belongs to the LpxK family.

It carries out the reaction a lipid A disaccharide + ATP = a lipid IVA + ADP + H(+). Its pathway is glycolipid biosynthesis; lipid IV(A) biosynthesis; lipid IV(A) from (3R)-3-hydroxytetradecanoyl-[acyl-carrier-protein] and UDP-N-acetyl-alpha-D-glucosamine: step 6/6. In terms of biological role, transfers the gamma-phosphate of ATP to the 4'-position of a tetraacyldisaccharide 1-phosphate intermediate (termed DS-1-P) to form tetraacyldisaccharide 1,4'-bis-phosphate (lipid IVA). In Pasteurella multocida (strain Pm70), this protein is Tetraacyldisaccharide 4'-kinase.